The following is a 187-amino-acid chain: GTPase KRas (187 aa).

GTP-binding positions include 10–18, 29–35, 59–60, and 116–119; these read GAVGVGKSA, VDEYDPT, AG, and NKCA. The short motif at 32–40 is the Effector region element; it reads YDPTIEDSY. The tract at residues 168–187 is disordered; it reads EKMSKDGKKKKKSKTKCSIL. The residue at position 184 (cysteine 184) is a Cysteine methyl ester. Cysteine 184 carries S-farnesyl cysteine lipidation. Positions 185-187 are cleaved as a propeptide — removed in mature form; that stretch reads SIL.

This sequence belongs to the small GTPase superfamily. Ras family.

It localises to the cell membrane. The protein localises to the cytoplasm. It catalyses the reaction GTP + H2O = GDP + phosphate + H(+). Alternates between an inactive form bound to GDP and an active form bound to GTP. Activated by a guanine nucleotide-exchange factor (GEF) and inactivated by a GTPase-activating protein (GAP). Ras proteins bind GDP/GTP and possess intrinsic GTPase activity. Plays an important role in the regulation of cell proliferation. The polypeptide is GTPase KRas (kras) (Xenopus laevis (African clawed frog)).